We begin with the raw amino-acid sequence, 222 residues long: Triosephosphate isomerase (222 aa).

Residue asparagine 9–lysine 11 coordinates substrate. Histidine 93 serves as the catalytic Electrophile. Glutamate 141 acts as the Proton acceptor in catalysis. Residues isoleucine 146, glycine 181, and alanine 202 to serine 203 contribute to the substrate site.

It belongs to the triosephosphate isomerase family. In terms of assembly, homotetramer; dimer of dimers.

The protein resides in the cytoplasm. The catalysed reaction is D-glyceraldehyde 3-phosphate = dihydroxyacetone phosphate. Its pathway is carbohydrate biosynthesis; gluconeogenesis. It functions in the pathway carbohydrate degradation; glycolysis; D-glyceraldehyde 3-phosphate from glycerone phosphate: step 1/1. Involved in the gluconeogenesis. Catalyzes stereospecifically the conversion of dihydroxyacetone phosphate (DHAP) to D-glyceraldehyde-3-phosphate (G3P). The protein is Triosephosphate isomerase of Methanothermus fervidus (strain ATCC 43054 / DSM 2088 / JCM 10308 / V24 S).